Here is a 272-residue protein sequence, read N- to C-terminus: Dermonecrotic toxin LvSicTox-alphaIC1bi (272 aa).

His-5 is a catalytic residue. Residues Glu-25 and Asp-27 each contribute to the Mg(2+) site. His-41 acts as the Nucleophile in catalysis. 2 disulfide bridges follow: Cys-45–Cys-51 and Cys-47–Cys-189. Mg(2+) is bound at residue Asp-84.

Belongs to the arthropod phospholipase D family. Class II subfamily. Mg(2+) is required as a cofactor. Expressed by the venom gland.

It is found in the secreted. It carries out the reaction an N-(acyl)-sphingosylphosphocholine = an N-(acyl)-sphingosyl-1,3-cyclic phosphate + choline. It catalyses the reaction an N-(acyl)-sphingosylphosphoethanolamine = an N-(acyl)-sphingosyl-1,3-cyclic phosphate + ethanolamine. The catalysed reaction is a 1-acyl-sn-glycero-3-phosphocholine = a 1-acyl-sn-glycero-2,3-cyclic phosphate + choline. The enzyme catalyses a 1-acyl-sn-glycero-3-phosphoethanolamine = a 1-acyl-sn-glycero-2,3-cyclic phosphate + ethanolamine. Dermonecrotic toxins cleave the phosphodiester linkage between the phosphate and headgroup of certain phospholipids (sphingolipid and lysolipid substrates), forming an alcohol (often choline) and a cyclic phosphate. This toxin acts on sphingomyelin (SM). It may also act on ceramide phosphoethanolamine (CPE), lysophosphatidylcholine (LPC) and lysophosphatidylethanolamine (LPE), but not on lysophosphatidylserine (LPS), and lysophosphatidylglycerol (LPG). It acts by transphosphatidylation, releasing exclusively cyclic phosphate products as second products. Induces dermonecrosis, hemolysis, increased vascular permeability, edema, inflammatory response, and platelet aggregation. In Loxosceles variegata (Recluse spider), this protein is Dermonecrotic toxin LvSicTox-alphaIC1bi.